Reading from the N-terminus, the 274-residue chain is Undecaprenyl-diphosphatase (274 aa).

The next 8 membrane-spanning stretches (helical) occupy residues Ser6 to Ser26, Ala45 to Trp65, Gly94 to Ile114, Leu117 to Ala137, Tyr155 to Ser174, Tyr191 to Leu211, Gly223 to Ile243, and Ile253 to Phe273.

Belongs to the UppP family.

Its subcellular location is the cell inner membrane. The catalysed reaction is di-trans,octa-cis-undecaprenyl diphosphate + H2O = di-trans,octa-cis-undecaprenyl phosphate + phosphate + H(+). Catalyzes the dephosphorylation of undecaprenyl diphosphate (UPP). Confers resistance to bacitracin. The sequence is that of Undecaprenyl-diphosphatase from Serratia proteamaculans (strain 568).